The chain runs to 364 residues: Thymidine kinase (364 aa).

36 to 43 (GPFGVGKT) contacts ATP. The active-site Proton acceptor is the glutamate 64. Residue glutamine 108 coordinates substrate. Arginine 201 is an ATP binding site. Arginine 207 serves as a coordination point for substrate.

Belongs to the herpesviridae thymidine kinase family. As to quaternary structure, homodimer.

It carries out the reaction thymidine + ATP = dTMP + ADP + H(+). Its function is as follows. Catalyzes the transfer of the gamma-phospho group of ATP to thymidine to generate dTMP in the salvage pathway of pyrimidine synthesis. The dTMP serves as a substrate for DNA polymerase during viral DNA replication. Allows the virus to be reactivated and to grow in non-proliferative cells lacking a high concentration of phosphorylated nucleic acid precursors. The polypeptide is Thymidine kinase (Infectious laryngotracheitis virus (strain Thorne V882) (ILTV)).